Reading from the N-terminus, the 1183-residue chain is DNA-directed RNA polymerase subunit beta (1183 aa).

It belongs to the RNA polymerase beta chain family. The RNAP catalytic core consists of 2 alpha, 1 beta, 1 beta' and 1 omega subunit. When a sigma factor is associated with the core the holoenzyme is formed, which can initiate transcription.

It catalyses the reaction RNA(n) + a ribonucleoside 5'-triphosphate = RNA(n+1) + diphosphate. Functionally, DNA-dependent RNA polymerase catalyzes the transcription of DNA into RNA using the four ribonucleoside triphosphates as substrates. In Staphylococcus aureus (strain Mu50 / ATCC 700699), this protein is DNA-directed RNA polymerase subunit beta.